We begin with the raw amino-acid sequence, 150 residues long: Cell division protein SepF (150 aa).

Belongs to the SepF family. Homodimer. Interacts with FtsZ.

Its subcellular location is the cytoplasm. In terms of biological role, cell division protein that is part of the divisome complex and is recruited early to the Z-ring. Probably stimulates Z-ring formation, perhaps through the cross-linking of FtsZ protofilaments. Its function overlaps with FtsA. In Clostridium kluyveri (strain NBRC 12016), this protein is Cell division protein SepF.